The chain runs to 401 residues: Na(+)/H(+) antiporter NhaA 2 (401 aa).

Helical transmembrane passes span 13 to 33 (AAGG…ANSP), 59 to 79 (LLLW…GLEV), 94 to 114 (ITLP…IYVW), 125 to 145 (GWAI…TIFG), 154 to 174 (LFLL…IALF), 178 to 198 (DLST…FLLN), 209 to 229 (VLIG…ATLA), 260 to 280 (WVGF…SLFG), 292 to 312 (LGIA…VCWI), 332 to 352 (GVSL…SLAF), and 363 to 383 (VKAG…VLLA).

This sequence belongs to the NhaA Na(+)/H(+) (TC 2.A.33) antiporter family.

It localises to the cell inner membrane. It catalyses the reaction Na(+)(in) + 2 H(+)(out) = Na(+)(out) + 2 H(+)(in). Its function is as follows. Na(+)/H(+) antiporter that extrudes sodium in exchange for external protons. In Pseudoalteromonas atlantica (strain T6c / ATCC BAA-1087), this protein is Na(+)/H(+) antiporter NhaA 2.